Here is a 462-residue protein sequence, read N- to C-terminus: Cathepsin F (462 aa).

A signal peptide spans 1–19 (MAPLLQLLWLLTLLSTVAL). Positions 20 to 248 (SPVPAKPWAD…MSPAKSINDL (229 aa)) are cleaved as a propeptide — activation peptide. N-linked (GlcNAc...) asparagine glycans are attached at residues Asn35, Asn138, and Asn173. Intrachain disulfides connect Cys270-Cys311 and Cys304-Cys344. Cys273 is a catalytic residue. N-linked (GlcNAc...) asparagine glycans are attached at residues Asn345 and Asn356. A disulfide bond links Cys402 and Cys450. His409 is an active-site residue. N-linked (GlcNAc...) asparagine glycosylation is present at Asn418. Residue Asn429 is part of the active site.

This sequence belongs to the peptidase C1 family.

The protein resides in the lysosome. The enzyme catalyses The recombinant enzyme cleaves synthetic substrates with Phe and Leu (better than Val) in P2, with high specificity constant (kcat/Km) comparable to that of cathepsin L.. In terms of biological role, thiol protease which is believed to participate in intracellular degradation and turnover of proteins. Has also been implicated in tumor invasion and metastasis. This is Cathepsin F (Ctsf) from Mus musculus (Mouse).